A 195-amino-acid chain; its full sequence is MMNETGMAAAPAEAAWRIWQAPRQQTAFRQLMTAFSYPGRVVPLADGAESALLLVLTTLVDSACALADPLHALSSDDLRRLGVRSASVEAAEFVLADGNRLLEATPRLGSLENPEQGATVVMRVSRFGEGPHLRLTGPGIQHEQVLQVSGIDPGWWKQRSEWNAHFPLGVDLILVSGHEVAVLPRTTHINLKGAH.

It belongs to the PhnH family.

Belongs to an operon involved in hypophosphite oxidation. Exact function not known. The protein is Putative C-P lyase subunit protein HtxG (htxG) of Stutzerimonas stutzeri (Pseudomonas stutzeri).